A 147-amino-acid polypeptide reads, in one-letter code: Protein MC014 (147 aa).

The protein localises to the host nucleus. The protein is Protein MC014 (MC014) of Homo sapiens (Human).